Here is a 242-residue protein sequence, read N- to C-terminus: uncharacterized protein (242 aa).

2 disordered regions span residues 43–70 (SRRSGKTSAVLKAGRQSVSGRKNSTSKD) and 112–162 (RMSR…VTPR). Over residues 58–70 (QSVSGRKNSTSKD) the composition is skewed to polar residues. Low complexity-rich tracts occupy residues 122–139 (ERAAAAAAAAAGGDAGHA) and 147–162 (ADGARAPRSPGQVTPR).

This is an uncharacterized protein from Homo sapiens (Human).